Consider the following 111-residue polypeptide: Ig kappa chain V-III region PC 7769 (111 aa).

The framework-1 stretch occupies residues 1–23 (DIVLTQSPASLAVSLGQRATISC). Residues C23 and C92 are joined by a disulfide bond. The segment at 24-38 (KASQSVDYDGDSYMN) is complementarity-determining-1. Residues 39 to 53 (WYQQKPGQPPKVLIF) form a framework-2 region. Residues 54–60 (AASNLES) are complementarity-determining-2. Residues 61 to 92 (GIPARFSGSGSGTDFTLNIHPVEEEDAATYYC) are framework-3. Residues 93–101 (QQSNEDPWT) form a complementarity-determining-3 region. The interval 102-111 (FGSGTKLEIK) is framework-4.

The protein is Ig kappa chain V-III region PC 7769 of Mus musculus (Mouse).